Here is a 1362-residue protein sequence, read N- to C-terminus: Mediator of RNA polymerase II transcription subunit 12 (1362 aa).

The tract at residues 31-51 is disordered; it reads LRPPDDIHPLVDPARIGDSVY.

It belongs to the Mediator complex subunit 12 family. In terms of assembly, component of the SRB8-11 complex, which itself associates with the Mediator complex.

Its subcellular location is the nucleus. Functionally, component of the SRB8-11 complex. The SRB8-11 complex is a regulatory module of the Mediator complex which is itself involved in regulation of basal and activated RNA polymerase II-dependent transcription. The SRB8-11 complex may be involved in the transcriptional repression of a subset of genes regulated by Mediator. It may inhibit the association of the Mediator complex with RNA polymerase II to form the holoenzyme complex. In Yarrowia lipolytica (strain CLIB 122 / E 150) (Yeast), this protein is Mediator of RNA polymerase II transcription subunit 12 (SRB8).